Consider the following 234-residue polypeptide: Leucyl/phenylalanyl-tRNA--protein transferase (234 aa).

The protein belongs to the L/F-transferase family.

The protein localises to the cytoplasm. The enzyme catalyses N-terminal L-lysyl-[protein] + L-leucyl-tRNA(Leu) = N-terminal L-leucyl-L-lysyl-[protein] + tRNA(Leu) + H(+). The catalysed reaction is N-terminal L-arginyl-[protein] + L-leucyl-tRNA(Leu) = N-terminal L-leucyl-L-arginyl-[protein] + tRNA(Leu) + H(+). It carries out the reaction L-phenylalanyl-tRNA(Phe) + an N-terminal L-alpha-aminoacyl-[protein] = an N-terminal L-phenylalanyl-L-alpha-aminoacyl-[protein] + tRNA(Phe). Functions in the N-end rule pathway of protein degradation where it conjugates Leu, Phe and, less efficiently, Met from aminoacyl-tRNAs to the N-termini of proteins containing an N-terminal arginine or lysine. The sequence is that of Leucyl/phenylalanyl-tRNA--protein transferase from Shigella dysenteriae serotype 1 (strain Sd197).